The primary structure comprises 287 residues: Ethylene-inducing xylanase 3 (287 aa).

The first 19 residues, 1–19, serve as a signal peptide directing secretion; it reads MVCFSSLFVAASAIAVVFA. The GH11 domain occupies 31 to 219; the sequence is QSTPSSQGTH…SSGSARINVA (189 aa). Glutamate 115 (nucleophile) is an active-site residue. Glutamate 206 acts as the Proton donor in catalysis. One can recognise a CBM1 domain in the interval 252–287; that stretch reads SCAARWGQCGGSGWNGATCCSAGTCQAQNQWYSQCL.

Belongs to the glycosyl hydrolase 11 (cellulase G) family.

The enzyme catalyses Endohydrolysis of (1-&gt;4)-beta-D-xylosidic linkages in xylans.. Its pathway is glycan degradation; xylan degradation. Its function is as follows. Endo-1,4-beta-xylanase involved in the hydrolysis of xylan, a major structural heterogeneous polysaccharide found in plant biomass representing the second most abundant polysaccharide in the biosphere, after cellulose. Exhibits immunity-inducing activity and induces cell death in Nicotiana benthamiana. This is Ethylene-inducing xylanase 3 from Verticillium longisporum (Verticillium dahliae var. longisporum).